The chain runs to 341 residues: Uroporphyrinogen decarboxylase (341 aa).

Substrate-binding positions include 23–27, Asp-73, Tyr-148, Ser-203, and His-318; that span reads RQAGR.

It belongs to the uroporphyrinogen decarboxylase family. In terms of assembly, homodimer.

The protein localises to the cytoplasm. It carries out the reaction uroporphyrinogen III + 4 H(+) = coproporphyrinogen III + 4 CO2. The protein operates within porphyrin-containing compound metabolism; protoporphyrin-IX biosynthesis; coproporphyrinogen-III from 5-aminolevulinate: step 4/4. Functionally, catalyzes the decarboxylation of four acetate groups of uroporphyrinogen-III to yield coproporphyrinogen-III. This is Uroporphyrinogen decarboxylase from Brucella ovis (strain ATCC 25840 / 63/290 / NCTC 10512).